We begin with the raw amino-acid sequence, 1904 residues long: Fatty acid synthase beta subunit hexB (1904 aa).

The tract at residues 24-395 (LSVAFGGQGP…TEGTGVRVIQ (372 aa)) is acetyltransferase (AT) domain. Positions 447–691 (TQLLNAPPVM…LIVQTEGVGD (245 aa)) are enoyl reductase (ER) domain. The tract at residues 1001 to 1491 (GPAADCWTHH…RPNDRLKIQL (491 aa)) is dehydratase (DH) domain. Positions 1399-1512 (PGWNEGSTVL…MKVQAFNDET (114 aa)) constitute a MaoC-like domain. The malonyl/palmitoyl transferase (MT/PT) domain stretch occupies residues 1530 to 1893 (YVFCGQGSQE…IEHVQSVTGS (364 aa)).

This sequence belongs to the fungal fatty acid synthetase subunit beta family. In terms of assembly, [Alpha(6)beta(6)] hexamers of two multifunctional subunits (alpha and beta).

It catalyses the reaction acetyl-CoA + n malonyl-CoA + 2n NADPH + 4n H(+) = a long-chain-acyl-CoA + n CoA + n CO2 + 2n NADP(+).. It carries out the reaction holo-[ACP] + acetyl-CoA = acetyl-[ACP] + CoA. The catalysed reaction is holo-[ACP] + malonyl-CoA = malonyl-[ACP] + CoA. The enzyme catalyses a (3R)-hydroxyacyl-[ACP] = a (2E)-enoyl-[ACP] + H2O. It catalyses the reaction a 2,3-saturated acyl-[ACP] + NAD(+) = a (2E)-enoyl-[ACP] + NADH + H(+). It carries out the reaction (9Z)-octadecenoyl-[ACP] + H2O = (9Z)-octadecenoate + holo-[ACP] + H(+). It participates in mycotoxin biosynthesis. In terms of biological role, fatty acid synthase beta subunit; part of the fragmented gene cluster that mediates the biosynthesis of dothistromin (DOTH), a polyketide toxin very similar in structure to the aflatoxin precursor, versicolorin B. The first step of the pathway is the conversion of acetate to norsolorinic acid (NOR) and requires the fatty acid synthase subunits hexA and hexB, as well as the polyketide synthase pksA. PksA combines a hexanoyl starter unit and 7 malonyl-CoA extender units to synthesize the precursor NOR. The hexanoyl starter unit is provided to the acyl-carrier protein (ACP) domain by the fungal fatty acid synthase hexA/hexB. The second step is the conversion of NOR to averantin (AVN) and requires the norsolorinic acid ketoreductase nor1, which catalyzes the dehydration of norsolorinic acid to form (1'S)-averantin. The cytochrome P450 monooxygenase avnA then catalyzes the hydroxylation of AVN to 5'hydroxyaverantin (HAVN). The next step is performed by adhA that transforms HAVN to averufin (AVF). Averufin might then be converted to hydroxyversicolorone by cypX and avfA. Hydroxyversicolorone is further converted versiconal hemiacetal acetate (VHA) by moxY. VHA is then the substrate for the versiconal hemiacetal acetate esterase est1 to yield versiconal (VAL). Versicolorin B synthase vbsA then converts VAL to versicolorin B (VERB) by closing the bisfuran ring. Then, the activity of the versicolorin B desaturase verB leads to versicolorin A (VERA). DotB, a predicted chloroperoxidase, may perform epoxidation of the A-ring of VERA. Alternatively, a cytochrome P450, such as cypX or avnA could catalyze this step. It is also possible that another, uncharacterized, cytochrome P450 enzyme is responsible for this step. Opening of the epoxide could potentially be achieved by the epoxide hydrolase epoA. However, epoA seems not to be required for DOTH biosynthesis, but other epoxide hydrolases may have the ability to complement this hydrolysis. Alternatively, opening of the epoxide ring could be achieved non-enzymatically. The next step is the deoxygenation of ring A to yield the 5,8-dihydroxyanthraquinone which is most likely catalyzed by the NADPH dehydrogenase encoded by ver1. The last stages of DOTH biosynthesis are proposed to involve hydroxylation of the bisfuran. OrdB and norB might have oxidative roles here. An alternative possibility is that cytochrome P450 monoogenases such as avnA and cypX might perform these steps in addition to previously proposed steps. The sequence is that of Fatty acid synthase beta subunit hexB from Dothistroma septosporum (strain NZE10 / CBS 128990) (Red band needle blight fungus).